A 109-amino-acid chain; its full sequence is Tetraspanin-31 (109 aa).

The Cytoplasmic portion of the chain corresponds to 1-12 (MVCGGFACSKNA). A helical membrane pass occupies residues 13–33 (LCALNVVYMLVGLLLIGVAAW). Topologically, residues 34–44 (AKGLGLVSSIH) are extracellular. A helical transmembrane segment spans residues 45–65 (IIGGVIAVGVFLLLIAVAGLV). Over 66 to 72 (GAVNHHQ) the chain is Cytoplasmic. The helical transmembrane segment at 73 to 93 (VLLFFYMIILGLVFIFQFGIS) threads the bilayer. Residues 94–109 (CSCLAINLSKQAGIIN) are Extracellular-facing. The N-linked (GlcNAc...) asparagine glycan is linked to Asn-100.

Belongs to the tetraspanin (TM4SF) family.

The protein localises to the membrane. This chain is Tetraspanin-31 (TSPAN31), found in Sus scrofa (Pig).